The primary structure comprises 337 residues: uncharacterized protein (337 aa).

The region spanning 3–174 is the MurNAc-LAA domain; sequence IAVRGGHNFK…IGKLIAEAIN (172 aa).

This sequence to C.perfringens pIP404 ORF10.

This is an uncharacterized protein from Clostridium perfringens (strain 13 / Type A).